The primary structure comprises 147 residues: uncharacterized protein (147 aa).

Residues 1–59 enclose the Response regulatory domain; it reads MGAELVKWVKSHKIDAHIITFVAKMPYIDSIKLLEAGAKGCVWKTSHPAKLNRAIDSIS. In terms of domain architecture, HTH luxR-type spans 78-143; it reads RYSSDNQLTN…ELIKTALRMG (66 aa). The H-T-H motif DNA-binding region spans 102–121; it reads NKEIANFLQLSRKTVETHRL.

Overexpressed protein is phosphorylated in vitro by non-cognate histidine kinases BarA and UhpB.

This is an uncharacterized protein from Escherichia coli (strain K12).